The sequence spans 104 residues: Fusaric acid biosynthesis protein 2 (104 aa).

This sequence belongs to the YciI family.

It functions in the pathway mycotoxin biosynthesis. Its function is as follows. Part of the gene cluster that mediates the biosynthesis of fusaric acid, a mycotoxin with low to moderate toxicity to animals and humans, but with high phytotoxic properties. L-aspartate is suggested as fusaric acid amino acid precursor that is activated and further processed to O-acetyl-L-homoserine by cluster enzymes aspartate kinase FUB3 and homoserine O-acetyltransferase FUB5, as well as enzymes of the primary metabolism. The polyketide synthase (PKS) FUB1 generates the triketide trans-2-hexenal which is presumptively released by the hydrolase FUB4 and linked to the NRPS-bound amino acid precursor by NAD(P)-dependent dehydrogenase FUB6. FUB1, FUB4, and the non-canonical NRPS Fub8 may form an enzyme complex. Further processing of the NRPS-bound intermediate might be carried out by FUB6 and the sulfhydrylase FUB7, enabling a spontaneous electrocyclization to close the carbon backbone of fusaric acid. Dihydrofusaric acid is likely to be released via reduction by the thioester reductase (TR) domain of FUB8 whereupon the final oxidation to fusaric acid may (also) be performed by the FMN-dependent dehydrogenase FUB9. This chain is Fusaric acid biosynthesis protein 2, found in Gibberella moniliformis (strain M3125 / FGSC 7600) (Maize ear and stalk rot fungus).